A 1035-amino-acid polypeptide reads, in one-letter code: Kinesin-like protein KIN-4A (1035 aa).

A Kinesin motor domain is found at 10-369 (CVKVAVHVRP…LKYANRARNI (360 aa)). Residue 89–96 (GQTGSGKT) participates in ATP binding. Coiled coils occupy residues 380–437 (VADE…LRNH) and 498–702 (MLQD…RKSS). Disordered stretches follow at residues 697-720 (EARK…HMTE), 766-787 (VMSG…NTLS), and 882-928 (HSES…PLSP). Composition is skewed to polar residues over residues 704–716 (RDNS…SPGS) and 778–787 (NGNSRANTLS). The stretch at 850-904 (NVAADARCQVREKEMEIKEMKEQMTELVTILRHSESRRRETEKQLKQREQAAVTA) forms a coiled coil. Residues 882–898 (HSESRRRETEKQLKQRE) are compositionally biased toward basic and acidic residues. Residues 902–926 (VTATTSPGNGNGSVKHSADDSNTPL) are compositionally biased toward polar residues. The short motif at 971–987 (KKVSIAGQSGKLWRWKR) is the Nuclear localization signal element. The disordered stretch occupies residues 1014-1035 (DETMTRTRPRPQLLPHRPQRVM).

Belongs to the TRAFAC class myosin-kinesin ATPase superfamily. Kinesin family. KIN-4 subfamily. Homodimer. As to expression, expressed in young tissues with cell divisions, including initiating adventitious roots, primary root tips, flower primordia, intercalary meristems, sub-epidermal regions of young culms and panicles.

The protein resides in the nucleus. Its subcellular location is the cytoplasm. It is found in the cytoskeleton. May be regulated by cyclin-dependent kinase A. In terms of biological role, microtubule-dependent motor protein involved in the control of the oriented deposition of cellulose microfibrils. Involved in wall biogenesis and modification, and contributes to cell-cycle progression and cell division. Acts as a transcriptional activator in gibberellic acid (GA) biosynthesis pathway. Binds specifically to the DNA sequence 5'-ACCAACTTGAA-3' of the ent-kaurene oxidase 2 (CYP701A6 or OsKO2) promoter. May regulate CYP701A6 gene expression and mediates cell elongation by regulating the GA biosynthesis pathway. This Oryza sativa subsp. japonica (Rice) protein is Kinesin-like protein KIN-4A.